A 101-amino-acid polypeptide reads, in one-letter code: Putative pterin-4-alpha-carbinolamine dehydratase (101 aa).

This sequence belongs to the pterin-4-alpha-carbinolamine dehydratase family.

The enzyme catalyses (4aS,6R)-4a-hydroxy-L-erythro-5,6,7,8-tetrahydrobiopterin = (6R)-L-erythro-6,7-dihydrobiopterin + H2O. The polypeptide is Putative pterin-4-alpha-carbinolamine dehydratase (Rhizobium johnstonii (strain DSM 114642 / LMG 32736 / 3841) (Rhizobium leguminosarum bv. viciae)).